Consider the following 401-residue polypeptide: Mu-type opioid receptor (401 aa).

Over 1–69 the chain is Extracellular; that stretch reads MDSSADPRNA…CPPTGSPSMV (69 aa). Residues Asn-9, Asn-12, Asn-34, Asn-41, and Asn-49 are each glycosylated (N-linked (GlcNAc...) asparagine). A helical membrane pass occupies residues 70–94; that stretch reads TAITIMALYSIVCVVGLFGNFLVMY. The Cytoplasmic portion of the chain corresponds to 95–107; the sequence is VIVRYTKMKTATN. The chain crosses the membrane as a helical span at residues 108–132; it reads IYIFNLALADALATSTLPFQSVNYL. Over 133–143 the chain is Extracellular; sequence MGTWPFGTILC. A disulfide bridge links Cys-143 with Cys-220. The chain crosses the membrane as a helical span at residues 144–166; sequence KIVISIDYYNMFTSIFTLCTMSV. The Cytoplasmic segment spans residues 167-186; sequence DRYIAVCHPVKALDFRTPRN. Tyr-169 carries the phosphotyrosine modification. Residues 187–208 traverse the membrane as a helical segment; it reads AKIINVCNWILSSAIGLPVMFM. Topologically, residues 209–231 are extracellular; sequence ATTKYRNGSIDCALTFSHPTWYW. The helical transmembrane segment at 232–256 threads the bilayer; sequence ENLLKICVFIFAFIMPVLIITVCYG. Topologically, residues 257-280 are cytoplasmic; that stretch reads LMILRLKSVRMLSGSKEKDRNLRR. A helical transmembrane segment spans residues 281 to 307; that stretch reads ITRMVLVVVAVFIVCWTPIHIYVIIKA. Residues 308-315 are Extracellular-facing; sequence LITIPETT. Residues 316–339 form a helical membrane-spanning segment; it reads FQTVSWHFCIALGYTNSCLNPVLY. The short motif at 335 to 339 is the NPxxY; plays a role in stabilizing the activated conformation of the receptor element; it reads NPVLY. Residues 340–401 lie on the Cytoplasmic side of the membrane; that stretch reads AFLDENFKRC…NLEAETAPLP (62 aa). Residue Cys-354 is the site of S-palmitoyl cysteine attachment. The interval 365 to 385 is disordered; sequence NSARIRQNTRDHPSTANTVDR. The residue at position 366 (Ser-366) is a Phosphoserine. The residue at position 373 (Thr-373) is a Phosphothreonine. At Ser-378 the chain carries Phosphoserine. At Thr-397 the chain carries Phosphothreonine.

It belongs to the G-protein coupled receptor 1 family. As to quaternary structure, forms homooligomers and heterooligomers with other GPCRs, such as OPRD1, OPRK1, OPRL1, NPFFR2, ADRA2A, SSTR2, CNR1 and CCR5 (probably in dimeric forms). Interacts with heterotrimeric G proteins; interaction with a heterotrimeric complex containing GNAI1, GNB1 and GNG2 stabilizes the active conformation of the receptor and increases its affinity for endomorphin-2, the synthetic opioid peptide DAMGO and for morphinan agonists. Interacts with PPL; the interaction disrupts agonist-mediated G-protein activation. Interacts (via C-terminus) with DNAJB4 (via C-terminus). Interacts with calmodulin; the interaction inhibits the constitutive activity of OPRM1; it abolishes basal and attenuates agonist-stimulated G-protein coupling. Interacts with FLNA, PLD2, RANBP9 and WLS and GPM6A. Interacts with RTP4. Interacts with SYP and GNAS. Interacts with RGS9, RGS17, RGS20, RGS4, PPP1R9B and HINT1. Post-translationally, phosphorylated. Differentially phosphorylated in basal and agonist-induced conditions. Agonist-mediated phosphorylation modulates receptor internalization. Phosphorylated by GRK2 in a agonist-dependent manner. Phosphorylation at Tyr-169 requires receptor activation, is dependent on non-receptor protein tyrosine kinase Src and results in a decrease in agonist efficacy by reducing G-protein coupling efficiency. Phosphorylated on tyrosine residues; the phosphorylation is involved in agonist-induced G-protein-independent receptor down-regulation. Phosphorylation at Ser-378 is involved in G-protein-dependent but not beta-arrestin-dependent activation of the ERK pathway. Ubiquitinated. A basal ubiquitination seems not to be related to degradation. Ubiquitination is increased upon formation of OPRM1:OPRD1 oligomers leading to proteasomal degradation; the ubiquitination is diminished by RTP4.

It is found in the cell membrane. The protein resides in the cell projection. It localises to the axon. Its subcellular location is the perikaryon. The protein localises to the dendrite. It is found in the endosome. In terms of biological role, receptor for endogenous opioids such as beta-endorphin and endomorphin. Receptor for natural and synthetic opioids including morphine, heroin, DAMGO, fentanyl, etorphine, buprenorphin and methadone. Also activated by enkephalin peptides, such as Met-enkephalin or Met-enkephalin-Arg-Phe, with higher affinity for Met-enkephalin-Arg-Phe. Agonist binding to the receptor induces coupling to an inactive GDP-bound heterotrimeric G-protein complex and subsequent exchange of GDP for GTP in the G-protein alpha subunit leading to dissociation of the G-protein complex with the free GTP-bound G-protein alpha and the G-protein beta-gamma dimer activating downstream cellular effectors. The agonist- and cell type-specific activity is predominantly coupled to pertussis toxin-sensitive G(i) and G(o) G alpha proteins, GNAI1, GNAI2, GNAI3 and GNAO1, and to a lesser extent to pertussis toxin-insensitive G alpha proteins GNAZ and GNA15. They mediate an array of downstream cellular responses, including inhibition of adenylate cyclase activity and both N-type and L-type calcium channels, activation of inward rectifying potassium channels, mitogen-activated protein kinase (MAPK), phospholipase C (PLC), phosphoinositide/protein kinase (PKC), phosphoinositide 3-kinase (PI3K) and regulation of NF-kappa-B. Also couples to adenylate cyclase stimulatory G alpha proteins. The selective temporal coupling to G-proteins and subsequent signaling can be regulated by RGSZ proteins, such as RGS9, RGS17 and RGS4. Phosphorylation by members of the GPRK subfamily of Ser/Thr protein kinases and association with beta-arrestins is involved in short-term receptor desensitization. Beta-arrestins associate with the GPRK-phosphorylated receptor and uncouple it from the G-protein thus terminating signal transduction. The phosphorylated receptor is internalized through endocytosis via clathrin-coated pits which involves beta-arrestins. The activation of the ERK pathway occurs either in a G-protein-dependent or a beta-arrestin-dependent manner and is regulated by agonist-specific receptor phosphorylation. Acts as a class A G-protein coupled receptor (GPCR) which dissociates from beta-arrestin at or near the plasma membrane and undergoes rapid recycling. Receptor down-regulation pathways are varying with the agonist and occur dependent or independent of G-protein coupling. Endogenous ligands induce rapid desensitization, endocytosis and recycling. Heterooligomerization with other GPCRs can modulate agonist binding, signaling and trafficking properties. Involved in neurogenesis. The chain is Mu-type opioid receptor (OPRM1) from Sus scrofa (Pig).